Consider the following 633-residue polypeptide: DNA-directed RNA polymerase subunit gamma (633 aa).

4 residues coordinate Zn(2+): C74, C76, C89, and C92. Residues D471, D473, and D475 each contribute to the Mg(2+) site.

Belongs to the RNA polymerase beta' chain family. RpoC1 subfamily. In cyanobacteria the RNAP catalytic core is composed of 2 alpha, 1 beta, 1 beta', 1 gamma and 1 omega subunit. When a sigma factor is associated with the core the holoenzyme is formed, which can initiate transcription. Requires Mg(2+) as cofactor. It depends on Zn(2+) as a cofactor.

It carries out the reaction RNA(n) + a ribonucleoside 5'-triphosphate = RNA(n+1) + diphosphate. DNA-dependent RNA polymerase catalyzes the transcription of DNA into RNA using the four ribonucleoside triphosphates as substrates. In Prochlorococcus marinus (strain MIT 9211), this protein is DNA-directed RNA polymerase subunit gamma.